Here is a 755-residue protein sequence, read N- to C-terminus: Serine/threonine-protein kinase GL21140 (755 aa).

The span at 18–52 (QASASGSGTPKKTAASSAAAQNSKQLLDQLSQQQK) shows a compositional bias: low complexity. The tract at residues 18–128 (QASASGSGTP…GSANTNGSAS (111 aa)) is disordered. 2 stretches are compositionally biased toward basic and acidic residues: residues 53-66 (AQEE…RDCD) and 74-84 (EPEKDLDELRD). A compositionally biased stretch (polar residues) spans 87 to 99 (GSLTGSGSVGKSN). Low complexity predominate over residues 100 to 128 (GSLSGASSTTSAPAGTSTPGSANTNGSAS). Doublecortin domains lie at 157–243 (HRIK…VDYN) and 314–397 (RIVT…VDDF). One can recognise a Protein kinase domain in the interval 484–742 (YTLSQIIGDG…SEDILDHYWT (259 aa)). Residues 490–498 (IGDGNFAIV) and Lys513 contribute to the ATP site. Asp605 acts as the Proton acceptor in catalysis.

The protein belongs to the protein kinase superfamily. CAMK Ser/Thr protein kinase family. CaMK subfamily.

It catalyses the reaction L-seryl-[protein] + ATP = O-phospho-L-seryl-[protein] + ADP + H(+). It carries out the reaction L-threonyl-[protein] + ATP = O-phospho-L-threonyl-[protein] + ADP + H(+). The polypeptide is Serine/threonine-protein kinase GL21140 (Drosophila persimilis (Fruit fly)).